The primary structure comprises 860 residues: Glucans biosynthesis glucosyltransferase H (860 aa).

Helical transmembrane passes span 141 to 161 (FILL…MKGI), 187 to 207 (VLPY…FCWV), 515 to 535 (VFLT…FLVL), 572 to 592 (LFST…MLIW), 599 to 619 (FGGV…SVLL), and 682 to 702 (FLWW…VSVI).

The protein belongs to the glycosyltransferase 2 family. OpgH subfamily.

It localises to the cell inner membrane. It participates in glycan metabolism; osmoregulated periplasmic glucan (OPG) biosynthesis. Functionally, involved in the biosynthesis of osmoregulated periplasmic glucans (OPGs). The polypeptide is Glucans biosynthesis glucosyltransferase H (Pseudomonas paraeruginosa (strain DSM 24068 / PA7) (Pseudomonas aeruginosa (strain PA7))).